A 390-amino-acid chain; its full sequence is Zinc finger protein 121 (390 aa).

Residues 88 to 110 (FEYSDCEEAFVDQSHLQANRITH) form a C2H2-type 1; degenerate zinc finger. The C2H2-type 2; degenerate zinc finger occupies 116–138 (YEQKQCGRAFTYSTSHAVSVKMH). 9 consecutive C2H2-type zinc fingers follow at residues 144–166 (YECK…MRTH), 172–194 (YECK…VRIH), 200–222 (YQCK…VRIH), 228–250 (YECN…FKTH), 256–278 (FECK…FRIH), 284–306 (YKCK…VKIH), 312–334 (YECK…IRTH), 340–362 (YICK…VRIH), and 368–390 (YICN…LKTH).

Belongs to the krueppel C2H2-type zinc-finger protein family.

The protein localises to the nucleus. Its function is as follows. May be involved in transcriptional regulation. This is Zinc finger protein 121 (ZNF121) from Homo sapiens (Human).